Here is a 100-residue protein sequence, read N- to C-terminus: MTEKLSVEVAYARPDRQWLVALTLPAGATALDAALASGILEACPELDRTALKLGVFGKAAKPDAALREHDRVEIYRPLLADPKEVRRQRAEAGKRMKKGG.

This sequence belongs to the UPF0125 (RnfH) family.

The chain is UPF0125 protein CV_3462 from Chromobacterium violaceum (strain ATCC 12472 / DSM 30191 / JCM 1249 / CCUG 213 / NBRC 12614 / NCIMB 9131 / NCTC 9757 / MK).